The following is a 115-amino-acid chain: Large ribosomal subunit protein bL19 (115 aa).

Belongs to the bacterial ribosomal protein bL19 family.

Functionally, this protein is located at the 30S-50S ribosomal subunit interface and may play a role in the structure and function of the aminoacyl-tRNA binding site. The protein is Large ribosomal subunit protein bL19 of Parabacteroides distasonis (strain ATCC 8503 / DSM 20701 / CIP 104284 / JCM 5825 / NCTC 11152).